A 251-amino-acid chain; its full sequence is Ribosomal RNA small subunit methyltransferase J (251 aa).

Residues 100–101 (RD), 116–117 (ER), and D170 each bind S-adenosyl-L-methionine.

It belongs to the methyltransferase superfamily. RsmJ family.

The protein localises to the cytoplasm. It carries out the reaction guanosine(1516) in 16S rRNA + S-adenosyl-L-methionine = N(2)-methylguanosine(1516) in 16S rRNA + S-adenosyl-L-homocysteine + H(+). Functionally, specifically methylates the guanosine in position 1516 of 16S rRNA. In Actinobacillus pleuropneumoniae serotype 5b (strain L20), this protein is Ribosomal RNA small subunit methyltransferase J.